The chain runs to 277 residues: Protein OPG166 (277 aa).

2 N-linked (GlcNAc...) asparagine; by host glycosylation sites follow: Asn-29 and Asn-58. A run of 5 helical transmembrane segments spans residues Thr-124–Tyr-144, Gly-156–Phe-176, Ile-186–Ser-206, Leu-219–Leu-239, and Leu-247–Val-267.

It belongs to the orthopoxvirus OPG166 protein family.

Its subcellular location is the host membrane. In terms of biological role, promotes, when overexpressed, the influx of extracellular Ca(2+), leading to membrane permeability and host cell necrosis. The protein is Protein OPG166 (OPG166) of Cynomys gunnisoni (Gunnison's prairie dog).